The primary structure comprises 84 residues: MANHISSEKRIRQTNARRLHNRYYARTARNAVKAFRALTDRTEAEKKYPVLASMLDRLAGKNIIHKNKAANLKSKLARRINTLA.

It belongs to the bacterial ribosomal protein bS20 family.

Binds directly to 16S ribosomal RNA. The protein is Small ribosomal subunit protein bS20 of Porphyromonas gingivalis (strain ATCC 33277 / DSM 20709 / CIP 103683 / JCM 12257 / NCTC 11834 / 2561).